A 243-amino-acid polypeptide reads, in one-letter code: Orotidine 5'-phosphate decarboxylase (243 aa).

Residues aspartate 19, lysine 41, 69–78 (DLKFFDIPAT), threonine 124, arginine 185, glutamine 194, glycine 214, and arginine 215 each bind substrate. Lysine 71 acts as the Proton donor in catalysis.

It belongs to the OMP decarboxylase family. Type 1 subfamily. Homodimer.

The catalysed reaction is orotidine 5'-phosphate + H(+) = UMP + CO2. The protein operates within pyrimidine metabolism; UMP biosynthesis via de novo pathway; UMP from orotate: step 2/2. Its function is as follows. Catalyzes the decarboxylation of orotidine 5'-monophosphate (OMP) to uridine 5'-monophosphate (UMP). The polypeptide is Orotidine 5'-phosphate decarboxylase (Xanthomonas oryzae pv. oryzae (strain MAFF 311018)).